The primary structure comprises 260 residues: MDRHSSYIFIWLQLELCAMAVLLTKGEIRCYCDAAHCVATGYMCKSELSACFSRLLDPQNTNSPLTHGCLDSLASTADICRAKQAQNHSGPTMPTLECCHEDMCNYRGLHDVLSPPKSEASGQGNRYQHDSSRNLITKVQELTSSKELWFRAAVIAVPIAGGLILVLLIMLALRMLRSENKRLQDQRQQMLSRLHYSFHGHHSKKGQVAKLDLECMVPVSGQENCCLTCDKMRQADLSNEKILSLVHWGMYSGHGKLEFV.

An N-terminal signal peptide occupies residues 1 to 26 (MDRHSSYIFIWLQLELCAMAVLLTKG). Residues 27–152 (EIRCYCDAAH…TSSKELWFRA (126 aa)) are Extracellular-facing. N-linked (GlcNAc...) asparagine glycosylation is present at Asn-87. A helical transmembrane segment spans residues 153–173 (AVIAVPIAGGLILVLLIMLAL). At 174–260 (RMLRSENKRL…YSGHGKLEFV (87 aa)) the chain is on the cytoplasmic side.

Belongs to the BAMBI family. Detected in granulosa and thecal cells of adult ovaries and in spermatogonia, spermatocytes, round spermatids, and Sertoli cells of adult testes.

It localises to the membrane. In terms of biological role, negatively regulates TGF-beta signaling. This is BMP and activin membrane-bound inhibitor homolog (Bambi) from Rattus norvegicus (Rat).